We begin with the raw amino-acid sequence, 621 residues long: Myosin-binding protein C, slow-type (621 aa).

Ig-like C2-type domains are found at residues 1–53 (EEIV…VDLR), 54–142 (PLKI…HVID), and 144–241 (PKII…LWIS). Residue threonine 28 is modified to Phosphothreonine. The residue at position 233 (serine 233) is a Phosphoserine. Fibronectin type-III domains lie at 244 to 343 (LRLA…TSPP), 344 to 459 (TLLA…IEPP), and 556 to 621 (PPQA…VIGN). A Phosphothreonine modification is found at threonine 420. Tyrosine 445 is subject to Phosphotyrosine. The 95-residue stretch at 459–553 (PKIRIPRHLK…ASIDIQIVDR (95 aa)) folds into the Ig-like C2-type 4 domain.

The protein belongs to the immunoglobulin superfamily. MyBP family. As to quaternary structure, interacts with USP25 (isoform USP25m only); the interaction prevents proteasomal degradation of MYBPC1.

In terms of biological role, thick filament-associated protein located in the crossbridge region of vertebrate striated muscle a bands. Slow skeletal protein that binds to both myosin and actin. In vitro, binds to native thin filaments and modifies the activity of actin-activated myosin ATPase. May modulate muscle contraction or may play a more structural role. This chain is Myosin-binding protein C, slow-type (Mybpc1), found in Rattus norvegicus (Rat).